A 423-amino-acid chain; its full sequence is Maltooligosaccharide ABC transporter solute-binding lipoprotein (423 aa).

A signal peptide spans 1-24 (MSSKFMKSAAVLGTATLASLLLVA). Cys25 carries N-palmitoyl cysteine lipidation. Cys25 is lipidated: S-diacylglycerol cysteine. Residues Tyr52, Asp77, Asp83, 103–104 (DR), Glu148, Asp193, Asn196, 251–254 (EGAG), Trp274, and Lys307 each bind substrate.

This sequence belongs to the bacterial solute-binding protein 1 family.

The protein resides in the cell membrane. Its function is as follows. Part of an ABC transporter complex involved in the uptake of maltodextrins. Binds glycogen-derived linear maltooligosaccharides increasing in size from maltotriose to maltooctaose with the highest affinity for maltotriose. Has a very weak affinity for maltose. Has also a very low affinity for maltotetraitol, indicating that the binding is selective for maltooligosaccharides with an intact reducing end. The polypeptide is Maltooligosaccharide ABC transporter solute-binding lipoprotein (Streptococcus pneumoniae serotype 4 (strain ATCC BAA-334 / TIGR4)).